The primary structure comprises 454 residues: NADP-specific glutamate dehydrogenase (454 aa).

Ser-2 is modified (N-acetylserine). Lys-114 is a catalytic residue.

Belongs to the Glu/Leu/Phe/Val dehydrogenases family. As to quaternary structure, homohexamer.

The enzyme catalyses L-glutamate + NADP(+) + H2O = 2-oxoglutarate + NH4(+) + NADPH + H(+). The polypeptide is NADP-specific glutamate dehydrogenase (GDH) (Neurospora intermedia).